Here is a 290-residue protein sequence, read N- to C-terminus: Probable branched-chain-amino-acid aminotransferase (290 aa).

At lysine 155 the chain carries N6-(pyridoxal phosphate)lysine.

This sequence belongs to the class-IV pyridoxal-phosphate-dependent aminotransferase family. Pyridoxal 5'-phosphate serves as cofactor.

The enzyme catalyses L-leucine + 2-oxoglutarate = 4-methyl-2-oxopentanoate + L-glutamate. The catalysed reaction is L-isoleucine + 2-oxoglutarate = (S)-3-methyl-2-oxopentanoate + L-glutamate. It carries out the reaction L-valine + 2-oxoglutarate = 3-methyl-2-oxobutanoate + L-glutamate. The protein operates within amino-acid biosynthesis; L-isoleucine biosynthesis; L-isoleucine from 2-oxobutanoate: step 4/4. It functions in the pathway amino-acid biosynthesis; L-leucine biosynthesis; L-leucine from 3-methyl-2-oxobutanoate: step 4/4. It participates in amino-acid biosynthesis; L-valine biosynthesis; L-valine from pyruvate: step 4/4. Acts on leucine, isoleucine and valine. In Rickettsia felis (strain ATCC VR-1525 / URRWXCal2) (Rickettsia azadi), this protein is Probable branched-chain-amino-acid aminotransferase (ilvE).